A 212-amino-acid chain; its full sequence is Thylakoid membrane protein slr1949 (212 aa).

A helical membrane pass occupies residues 109–131 (WVQDGLLLLLALGLCGISGYRLW). The stretch at 180-212 (PNRRQRKQYETRLQALRQSAAKMKAKTQKAKAL) forms a coiled coil.

The protein resides in the cellular thylakoid membrane. The protein is Thylakoid membrane protein slr1949 of Synechocystis sp. (strain ATCC 27184 / PCC 6803 / Kazusa).